We begin with the raw amino-acid sequence, 363 residues long: Fructose-bisphosphate aldolase C (363 aa).

Tyr5 carries the phosphotyrosine modification. A phosphoserine mark is found at Ser36, Ser39, and Ser45. A substrate-binding site is contributed by Arg56. Lys111 bears the N6-acetyllysine mark. Lys147 lines the substrate pocket. Residue Glu188 is the Proton acceptor of the active site. The Schiff-base intermediate with dihydroxyacetone-P role is filled by Lys230.

This sequence belongs to the class I fructose-bisphosphate aldolase family. As to quaternary structure, homotetramer. Interacts with ATP6V1E1. As to expression, expressed exclusively in Purkinje cells in bands running from anterior to posterior across most of the cerebellum. Expressed at higher levels in the brains of BSE-infected animals.

The catalysed reaction is beta-D-fructose 1,6-bisphosphate = D-glyceraldehyde 3-phosphate + dihydroxyacetone phosphate. The protein operates within carbohydrate degradation; glycolysis; D-glyceraldehyde 3-phosphate and glycerone phosphate from D-glucose: step 4/4. This chain is Fructose-bisphosphate aldolase C (Aldoc), found in Mus musculus (Mouse).